The chain runs to 90 residues: HssA/B-like protein 4 (90 aa).

It belongs to the hssA/B family.

The polypeptide is HssA/B-like protein 4 (hssl4) (Dictyostelium discoideum (Social amoeba)).